A 641-amino-acid polypeptide reads, in one-letter code: MAEDLETMKPSQAPQQPSLPQGSSKTYRSAEHSQALLSGLVALRDSGILFDVVLKVEGKSIEAHRILLAASCDYFRGMFAGGLKEMDQREVQIHGVSYSAMCRIMDFIYTSDLALSVNNVQETLTAACQLQISEVIQFCCDFLVSWVDEENVLELYKLADIFHLNRLTEQLDTFVLKNFITFSQTQMYRQLPLDKVFSLLNSNRLEVASENEVYEGALLYHYTPEQLEKDQVSLLESPKLLEAVRFPLMDLAILQRLHDKLGLCPLKTTVLKALEYHKNESMQPVMQGPNTQLRSEFHCVVGFGGMYSAPYTVLSDQVKYLNPLLGEWRPLTAPHAPRMSNQGIAVLNNFVYLIGGDNNVRGYRAEARCWRYDPRHSRWFQIQSMQQPRADLSVCVLGDFLYAVAGRDYHDELKEVERYDPFTNTWEYVAPLQKQVHAHAAAALDGRMYVACGRRGNTYLKDTFCYDPERDQWASVALSPVRRAWHGMAALQEKIYLIGGSNDDEGFRQDVLEVACYSPKTDQWTLVSPLPAGHGEPGIAVLAKKIFVLGGRSHNQGDRTDYVHVYEAERDYWEDGPRLEDDISGMAACVLTLPRSVLMDTDVWTQEMYMQYMDPVQNLADNASEVMSVSDWEDLDNSGED.

Positions 1–25 (MAEDLETMKPSQAPQQPSLPQGSSK) are disordered. Residues 10–24 (PSQAPQQPSLPQGSS) show a composition bias toward low complexity. A BTB domain is found at 50–117 (FDVVLKVEGK…IYTSDLALSV (68 aa)). Kelch repeat units follow at residues 299–349 (CVVG…VLNN), 350–399 (FVYL…VLGD), 400–446 (FLYA…ALDG), 448–493 (MYVA…ALQE), 494–544 (KIYL…VLAK), and 545–593 (KIFV…VLTL).

As to quaternary structure, component of the BCR(KLHL22) E3 ubiquitin ligase complex, at least composed of cul3, klhl22 and rbx1.

It is found in the cytoplasm. The protein localises to the cytosol. It localises to the cytoskeleton. Its subcellular location is the microtubule organizing center. The protein resides in the centrosome. It is found in the spindle. The protein localises to the nucleus. It localises to the lysosome. Its pathway is protein modification; protein ubiquitination. Functionally, substrate-specific adapter of a BCR (BTB-CUL3-RBX1) E3 ubiquitin ligase complex. The BCR(KLHL22) ubiquitin ligase complex could mediate the monoubiquitination of PLK1 and regulate its activity in spindle assembly checkpoint (SAC) and chromosome segregation. The BCR(KLHL22) ubiquitin ligase complex may also be responsible for the ubiquitin-dependent proteasomal degradation of DEPDC5 and the activation of the TORC1 pathway. This Xenopus tropicalis (Western clawed frog) protein is Kelch-like protein 22 (klhl22).